The chain runs to 232 residues: Transcriptional regulatory protein CpxR (232 aa).

The Response regulatory domain occupies 3-115 (KILLVDDDRE…ELVARIRAIL (113 aa)). Asp51 carries the 4-aspartylphosphate modification. A DNA-binding region (ompR/PhoB-type) is located at residues 131–230 (SPTLEVDALV…LRGRGYLMVS (100 aa)).

Post-translationally, phosphorylated by CpxA.

The protein resides in the cytoplasm. In terms of biological role, member of the two-component regulatory system CpxA/CpxR. This system combats a variety of extracytoplasmic protein-mediated toxicities. It performs this function by increasing the synthesis of the periplasmic protease, DegP as well as that of CpxP protein. The polypeptide is Transcriptional regulatory protein CpxR (cpxR) (Escherichia coli O157:H7).